We begin with the raw amino-acid sequence, 152 residues long: UPF0311 protein blr7842 (152 aa).

This sequence belongs to the UPF0311 family.

The protein is UPF0311 protein blr7842 of Bradyrhizobium diazoefficiens (strain JCM 10833 / BCRC 13528 / IAM 13628 / NBRC 14792 / USDA 110).